Reading from the N-terminus, the 224-residue chain is tRNA (guanine-N(7)-)-methyltransferase (224 aa).

Residues Glu-54, Glu-79, and Asp-129 each coordinate S-adenosyl-L-methionine. Residue Asp-129 is part of the active site. Positions 133 and 165 each coordinate substrate.

This sequence belongs to the class I-like SAM-binding methyltransferase superfamily. TrmB family.

The catalysed reaction is guanosine(46) in tRNA + S-adenosyl-L-methionine = N(7)-methylguanosine(46) in tRNA + S-adenosyl-L-homocysteine. The protein operates within tRNA modification; N(7)-methylguanine-tRNA biosynthesis. Its function is as follows. Catalyzes the formation of N(7)-methylguanine at position 46 (m7G46) in tRNA. This chain is tRNA (guanine-N(7)-)-methyltransferase, found in Chlamydia pneumoniae (Chlamydophila pneumoniae).